A 220-amino-acid polypeptide reads, in one-letter code: Avenin-3 (220 aa).

Positions 1–19 (MKTFLIFALLAMAATMATA) are cleaved as a signal peptide. Glutamine 20 carries the pyrrolidone carboxylic acid modification. Tandem repeats lie at residues 41–48 (QQMLLQQQ) and 49–56 (QQMLLQQQ). Residues 41–56 (QQMLLQQQQQMLLQQQ) are 2 X 8 AA tandem repeats of Q-Q-M-L-L-Q-Q-Q. Cystine bridges form between cysteine 69-cysteine 202, cysteine 77-cysteine 96, cysteine 103-cysteine 104, and cysteine 116-cysteine 210. The stretch at 128–137 (MQQQQFFQPQ) is one 2-1 repeat. The segment at 128-146 (MQQQQFFQPQMQQQFFQPQ) is 2 X 10 AA tandem repeats of M-Q-Q-Q-Q-F-F-Q-P-Q. The stretch at 138–146 (MQQQFFQPQ) is one 2-2; approximate repeat.

This sequence belongs to the gliadin/glutenin family. Monomer.

The protein resides in the vacuole. Its function is as follows. Seed storage protein. Serves as a source of nitrogen, carbon, and sulfur for the young developing seedling. This is Avenin-3 from Avena sativa (Oat).